Consider the following 711-residue polypeptide: MLNPIVRKFQYGQHTVTLETGMMARQATAAVMVSMDDTAVFVTVVGQKKAKPGQDFFPLTVNYQERTYAAGRIPGSFFRREGRPSEGETLIARLIDRPIRPLFPEGFVNEVQVIATVVSVNPQVNPDIVAMIGASAALSLSGIPFNGPIGAARVGYINDQYVLNPTQDELKESKLDLVVAGTEAAVLMVESEAELLSEDQMLGAVVFGHEQQQVVIQNINELVKEAGKPRWDWQPEPVNEALNARVAALAEARLSDAYRITDKQERYAQVDVIKSETIATLLAEDETLDENELGEILHAIEKNVVRSRVLAGEPRIDGREKDMIRGLDVRTGVLPRTHGSALFTRGETQALVTATLGTARDAQVLDELMGERTDTFLFHYNFPPYSVGETGMVGSPKRREIGHGRLAKRGVLAVMPDMDKFPYTVRVVSEITESNGSSSMASVCGASLALMDAGVPIKAAVAGIAMGLVKEGDNYVVLSDILGDEDHLGDMDFKVAGSRDGISALQMDIKIEGITKEIMQVALNQAKGARLHILGVMEQAINAPRGDISEFAPRIHTIKINPDKIKDVIGKGGSVIRALTEETGTTIEIEDDGTVKIAATDGEKAKHAIRRIEEITAEIEVGRVYNGKVTRIVDFGAFVAIGGGKEGLVHISQIADKRVEKVTDYLQMGQEVPVKVLEVDRQGRIRLSIKEATEQSQPAAAPEAPAAEQGE.

Residues D486 and D492 each coordinate Mg(2+). The KH domain occupies 553 to 612 (PRIHTIKINPDKIKDVIGKGGSVIRALTEETGTTIEIEDDGTVKIAATDGEKAKHAIRRI). The 69-residue stretch at 622–690 (GRVYNGKVTR…RQGRIRLSIK (69 aa)) folds into the S1 motif domain. Positions 689–711 (IKEATEQSQPAAAPEAPAAEQGE) are disordered. Residues 694-711 (EQSQPAAAPEAPAAEQGE) show a composition bias toward low complexity.

The protein belongs to the polyribonucleotide nucleotidyltransferase family. As to quaternary structure, component of the RNA degradosome, which is a multiprotein complex involved in RNA processing and mRNA degradation. It depends on Mg(2+) as a cofactor.

The protein resides in the cytoplasm. It catalyses the reaction RNA(n+1) + phosphate = RNA(n) + a ribonucleoside 5'-diphosphate. Functionally, involved in mRNA degradation. Catalyzes the phosphorolysis of single-stranded polyribonucleotides processively in the 3'- to 5'-direction. The chain is Polyribonucleotide nucleotidyltransferase from Escherichia coli O6:K15:H31 (strain 536 / UPEC).